We begin with the raw amino-acid sequence, 857 residues long: Dimethylglycine dehydrogenase, mitochondrial (857 aa).

Residues 1–43 (MLRLGALRLRGLALRSSQGRPSSAGLREGQESPPSPPEWKDRA) constitute a mitochondrion transit peptide. Residues 15–39 (RSSQGRPSSAGLREGQESPPSPPEW) form a disordered region. Residues 52-53 (CV), 73-74 (EK), and 80-88 (GSTWHAAGL) contribute to the FAD site. A Tele-8alpha-FAD histidine modification is found at His84. Lys107 carries the N6-acetyllysine modification. Position 141 is an N6-acetyllysine; alternate (Lys141). Lys141 carries the N6-succinyllysine; alternate modification. Residue Lys161 is modified to N6-acetyllysine. Val212 is a binding site for FAD. Lys216 bears the N6-acetyllysine mark. Trp244 is an FAD binding site. N6-succinyllysine occurs at positions 310 and 312. Residues Lys328 and Lys353 each carry the N6-acetyllysine modification. FAD is bound at residue 390–395 (FGYGII). 3 positions are modified to N6-acetyllysine; alternate: Lys427, Lys469, and Lys516. An N6-succinyllysine; alternate mark is found at Lys427, Lys469, and Lys516. 573-575 (ELT) serves as a coordination point for (6S)-5,6,7,8-tetrahydrofolate. N6-acetyllysine; alternate is present on Lys648. Lys648 carries the N6-succinyllysine; alternate modification. Residues Tyr669, 676–678 (ELY), and Tyr737 each bind (6S)-5,6,7,8-tetrahydrofolate. At Lys757 the chain carries N6-acetyllysine. Residue Lys786 is modified to N6-acetyllysine; alternate. Residue Lys786 is modified to N6-succinyllysine; alternate. Lys788 carries the post-translational modification N6-succinyllysine.

Belongs to the GcvT family. Requires FAD as cofactor.

The protein localises to the mitochondrion. The enzyme catalyses (6S)-5,6,7,8-tetrahydrofolyl-(gamma-L-Glu)(n) + N,N-dimethylglycine + oxidized [electron-transfer flavoprotein] + H(+) = (6R)-5,10-methylenetetrahydrofolyl-(gamma-L-Glu)(n) + sarcosine + reduced [electron-transfer flavoprotein]. It functions in the pathway amine and polyamine degradation; betaine degradation; sarcosine from betaine: step 2/2. In terms of biological role, catalyzes the demethylation of N,N-dimethylglycine to sarcosine. Also has activity with sarcosine in vitro. This chain is Dimethylglycine dehydrogenase, mitochondrial (Dmgdh), found in Rattus norvegicus (Rat).